The sequence spans 292 residues: Protein sarah (292 aa).

Low complexity predominate over residues 1–51 (MSDAAKSNNNASADAPDPTTPDATGEADAANAATPTTPRGNHNNNNSANGR). The tract at residues 1-111 (MSDAAKSNNN…TEPEVDADSF (111 aa)) is disordered. Phosphoserine occurs at positions 67, 72, and 100. Acidic residues predominate over residues 98–111 (VDSDTEPEVDADSF). A phosphothreonine mark is found at threonine 102 and threonine 196. Residues serine 215 and serine 219 each carry the phosphoserine modification. Threonine 246 is modified (phosphothreonine).

The protein belongs to the RCAN family. In terms of assembly, interacts with Pp2B-14D, CanA-14F and CanB2. Phosphorylation at Ser-215 and Ser-219 is essential for calcineurin activation and completion of female meiosis. Sgg is required for phosphorylation of Ser-215 in activated eggs. Ser-100, Thr-102 and Ser-219 are highly phosphorylated in both ovaries and activated eggs; however, phosphorylation at Ser-100 or Thr-102 is not required for sra function in completion of female meiosis. Expressed in central nervous system of the third instar larvae, with a relatively intense signal in the brain and weak signals in the ventral ganglion. Relatively low, but ubiquitous expression level is observed in leg and wing imaginal disks, no signal is detected in the eye-antennal disks. Expressed in all neurons in the adult brain.

Functionally, required for elongation of meiosis I spindle. Critical for ovulation, meiotic progression in oocytes and female courtship behavior, including their postmating changes. Regulates female meiosis by controlling calcineurin activity in the germline. Has a role in calcium signaling during egg activation; bcd mRNA polyadenylation and translation in the oocyte. This chain is Protein sarah (sra), found in Drosophila melanogaster (Fruit fly).